We begin with the raw amino-acid sequence, 30 residues long: AEVPMPLRQLTMTLPDGREESVMERTTLVA.

This sequence belongs to the ATPase alpha/beta chains family. As to quaternary structure, V-ATPase is a heteromultimeric enzyme composed of a peripheral catalytic V1 complex (main components: subunits A, B, C, D, E, and F) attached to an integral membrane V0 proton pore complex (main component: the proteolipid protein).

The catalysed reaction is ATP + H2O + 4 H(+)(in) = ADP + phosphate + 5 H(+)(out). In terms of biological role, catalytic subunit of the peripheral V1 complex of vacuolar ATPase. V-ATPase vacuolar ATPase is responsible for acidifying a variety of intracellular compartments in eukaryotic cells. The polypeptide is V-type proton ATPase catalytic subunit A isoform 2 (Equisetum arvense (Field horsetail)).